The sequence spans 534 residues: Glucans biosynthesis protein D (534 aa).

The segment at residues 1-28 (MYRRDFLKSVTAAWVAFGLPNPLGGAFA) is a signal peptide (tat-type signal).

The protein belongs to the OpgD/OpgG family. In terms of processing, predicted to be exported by the Tat system. The position of the signal peptide cleavage has not been experimentally proven.

The protein resides in the periplasm. Its pathway is glycan metabolism; osmoregulated periplasmic glucan (OPG) biosynthesis. Probably involved in the control of the structural glucose backbone of osmoregulated periplasmic glucans (OPGs). This is Glucans biosynthesis protein D from Xylella fastidiosa (strain M23).